The primary structure comprises 233 residues: uncharacterized protein (233 aa).

Transmembrane regions (helical) follow at residues 78–98 (FCLI…PVMY), 113–133 (FITC…LFKL), and 188–208 (FLLI…YGTI).

It is found in the membrane. This is an uncharacterized protein from Saccharomyces cerevisiae (strain ATCC 204508 / S288c) (Baker's yeast).